A 98-amino-acid polypeptide reads, in one-letter code: Nucleoid-associated protein pc0477 (98 aa).

It belongs to the YbaB/EbfC family. Homodimer.

Its subcellular location is the cytoplasm. The protein localises to the nucleoid. Functionally, binds to DNA and alters its conformation. May be involved in regulation of gene expression, nucleoid organization and DNA protection. The polypeptide is Nucleoid-associated protein pc0477 (Protochlamydia amoebophila (strain UWE25)).